A 784-amino-acid polypeptide reads, in one-letter code: Toll-like receptor 2 (784 aa).

Positions 1 to 20 (MPRALWPAWVWAIIILSMEG) are cleaved as a signal peptide. Residues 21-587 (ASDKASSLSC…ARLSLSECHR (567 aa)) are Extracellular-facing. An intrachain disulfide couples cysteine 30 to cysteine 36. LRR repeat units lie at residues 54–77 (VKSLDLSNNEITYVGNRDLQRCVN), 78–101 (LKTLRLGANEIHTVEEDSFFHLRN), 102–125 (LEYLDLSYNRLSNLSSSWFRSLYV), 126–150 (LKFLNLLGNLYKTLGETSLFSHLPD), 151–175 (LRTLKVGNSNSFTEIHEKDFTGLTF), 176–199 (LEELEISAQNLQIYVPKSLKSIQN), 200–223 (ISHLILHLKQPVLLVDILVDIVSS), 224–250 (LDCLELRDTNLHTFHFSEASISEMSTS), 251–278 (VKKLIFRNVQFTDESFVEVVKLFNYVSG), 279–308 (IVEVEFDDCTHDGIGDFRALSLDRIRHLGN), 309–337 (VETLTIRKLHIPQFFLFQDLSSIYPLTGK), 338–361 (VKRVTIENSKVFLVPCLLSQHLKS), 362–388 (LEYLDLSENLMSEETLKNSACKDAWPF), 389–414 (LQTLVLRQNRLKSLEKTGELLLTLKN), 415–437 (LNNLDISKNNFLSMPETCQWPGK), 438–457 (MKQLNLSSTKIRSLTQCLPQ), 458–478 (TLEILDVSNNNLDSFSLILPQ), 479–500 (LKELYISRNKLKTLPDASFLPV), and 501–524 (LSVMGISKNIINTFSKEQLDSFQQ). The N-linked (GlcNAc...) asparagine glycan is linked to asparagine 114. The N-linked (GlcNAc...) asparagine glycan is linked to asparagine 199. Residues cysteine 353 and cysteine 382 are joined by a disulfide bond. Residues cysteine 432 and cysteine 454 are joined by a disulfide bond. Asparagine 442 carries N-linked (GlcNAc...) asparagine glycosylation. The LRRCT domain occupies 525–579 (LKTLEAGGNNFICSCDFLSFTQGQQALGRVLVDWPDDYRCDSPSHVRGQRLQDAR). A helical transmembrane segment spans residues 588–608 (AAVVSAACCALFLFLLLTGVL). Residues 609–784 (CHRFHGLWYM…WLNLRAAIRS (176 aa)) are Cytoplasmic-facing. A TIR domain is found at 639–782 (ICYDAFVSYS…GFWLNLRAAI (144 aa)). Lysine 754 participates in a covalent cross-link: Glycyl lysine isopeptide (Lys-Gly) (interchain with G-Cter in ubiquitin). The ATG16L1-binding motif motif lies at 761–778 (YLEWPLDETQQEGFWLNL).

This sequence belongs to the Toll-like receptor family. In terms of assembly, interacts with LY96, TLR1 and TLR6 (via extracellular domain). TLR2 seems to exist in heterodimers with either TLR1 or TLR6 before stimulation by the ligand. The heterodimers form bigger oligomers in response to their corresponding ligands as well as further heterotypic associations with other receptors such as CD14 and/or CD36. Binds MYD88 (via TIR domain). Interacts with TICAM1. Interacts with CNPY3. Interacts with ATG16L1. Interacts with PPP1R11. Interacts with TICAM2. Interacts with TIRAP. Ubiquitinated at Lys-754 by PPP1R11, leading to its degradation. Deubiquitinated by USP2. Post-translationally, glycosylation of Asn-442 is critical for secretion of the N-terminal ectodomain of TLR2.

The protein resides in the membrane. It is found in the cytoplasmic vesicle. Its subcellular location is the phagosome membrane. The protein localises to the membrane raft. In terms of biological role, cooperates with LY96 to mediate the innate immune response to bacterial lipoproteins and other microbial cell wall components. Cooperates with TLR1 or TLR6 to mediate the innate immune response to bacterial lipoproteins or lipopeptides. Acts via MYD88 and TRAF6, leading to NF-kappa-B activation, cytokine secretion and the inflammatory response. May also promote apoptosis in response to lipoproteins. Forms activation clusters composed of several receptors depending on the ligand, these clusters trigger signaling from the cell surface and subsequently are targeted to the Golgi in a lipid-raft dependent pathway. Forms the cluster TLR2:TLR6:CD14:CD36 in response to diacylated lipopeptides and TLR2:TLR1:CD14 in response to triacylated lipopeptides. This chain is Toll-like receptor 2 (TLR2), found in Boselaphus tragocamelus (Nilgai).